Here is a 356-residue protein sequence, read N- to C-terminus: Holliday junction branch migration complex subunit RuvB (356 aa).

The tract at residues 4-191 is large ATPase domain (RuvB-L); that stretch reads TDKLATEQRI…FGIVARLEFY (188 aa). ATP contacts are provided by residues leucine 30, arginine 31, glycine 72, lysine 75, threonine 76, threonine 77, 138–140, arginine 181, tyrosine 191, and arginine 228; that span reads EDY. Residue threonine 76 participates in Mg(2+) binding. The interval 192–262 is small ATPAse domain (RuvB-S); that stretch reads DADQLSRIVR…VADAALAMLD (71 aa). Positions 265-356 are head domain (RuvB-H); the sequence is PVGFDLMDRK…RDEWDTPDGK (92 aa). Residues arginine 301, arginine 320, and arginine 325 each contribute to the DNA site.

The protein belongs to the RuvB family. As to quaternary structure, homohexamer. Forms an RuvA(8)-RuvB(12)-Holliday junction (HJ) complex. HJ DNA is sandwiched between 2 RuvA tetramers; dsDNA enters through RuvA and exits via RuvB. An RuvB hexamer assembles on each DNA strand where it exits the tetramer. Each RuvB hexamer is contacted by two RuvA subunits (via domain III) on 2 adjacent RuvB subunits; this complex drives branch migration. In the full resolvosome a probable DNA-RuvA(4)-RuvB(12)-RuvC(2) complex forms which resolves the HJ.

The protein localises to the cytoplasm. The enzyme catalyses ATP + H2O = ADP + phosphate + H(+). Its function is as follows. The RuvA-RuvB-RuvC complex processes Holliday junction (HJ) DNA during genetic recombination and DNA repair, while the RuvA-RuvB complex plays an important role in the rescue of blocked DNA replication forks via replication fork reversal (RFR). RuvA specifically binds to HJ cruciform DNA, conferring on it an open structure. The RuvB hexamer acts as an ATP-dependent pump, pulling dsDNA into and through the RuvAB complex. RuvB forms 2 homohexamers on either side of HJ DNA bound by 1 or 2 RuvA tetramers; 4 subunits per hexamer contact DNA at a time. Coordinated motions by a converter formed by DNA-disengaged RuvB subunits stimulates ATP hydrolysis and nucleotide exchange. Immobilization of the converter enables RuvB to convert the ATP-contained energy into a lever motion, pulling 2 nucleotides of DNA out of the RuvA tetramer per ATP hydrolyzed, thus driving DNA branch migration. The RuvB motors rotate together with the DNA substrate, which together with the progressing nucleotide cycle form the mechanistic basis for DNA recombination by continuous HJ branch migration. Branch migration allows RuvC to scan DNA until it finds its consensus sequence, where it cleaves and resolves cruciform DNA. The sequence is that of Holliday junction branch migration complex subunit RuvB from Burkholderia cenocepacia (strain ATCC BAA-245 / DSM 16553 / LMG 16656 / NCTC 13227 / J2315 / CF5610) (Burkholderia cepacia (strain J2315)).